A 188-amino-acid polypeptide reads, in one-letter code: NADH-quinone oxidoreductase subunit I (188 aa).

4Fe-4S ferredoxin-type domains lie at 44–74 and 90–119; these read LNRY…VEGA and RVYQ…MTNE. The [4Fe-4S] cluster site is built by cysteine 54, cysteine 57, cysteine 60, cysteine 64, cysteine 99, cysteine 102, cysteine 105, and cysteine 109. Positions 144-188 are disordered; sequence GMVDSPHPMAPGTTAEDYYRGTVTGGAAPASQDEPEADDTAGDRP. Residues 176–188 show a composition bias toward acidic residues; that stretch reads DEPEADDTAGDRP.

Belongs to the complex I 23 kDa subunit family. In terms of assembly, NDH-1 is composed of 14 different subunits. Subunits NuoA, H, J, K, L, M, N constitute the membrane sector of the complex. It depends on [4Fe-4S] cluster as a cofactor.

The protein resides in the cell membrane. It catalyses the reaction a quinone + NADH + 5 H(+)(in) = a quinol + NAD(+) + 4 H(+)(out). NDH-1 shuttles electrons from NADH, via FMN and iron-sulfur (Fe-S) centers, to quinones in the respiratory chain. The immediate electron acceptor for the enzyme in this species is believed to be ubiquinone. Couples the redox reaction to proton translocation (for every two electrons transferred, four hydrogen ions are translocated across the cytoplasmic membrane), and thus conserves the redox energy in a proton gradient. This chain is NADH-quinone oxidoreductase subunit I, found in Rhodococcus opacus (strain B4).